The chain runs to 558 residues: Atlastin-1 (558 aa).

A disordered region spans residues 1-28 (MAKSRRDRNSWGGFSEKSSDWSSEEEEP). The segment at 1-34 (MAKSRRDRNSWGGFSEKSSDWSSEEEEPVRKAGP) is N-terminal hypervariable region (HVR). At 1-449 (MAKSRRDRNS…NIFHAARTPA (449 aa)) the chain is on the cytoplasmic side. Phosphoserine is present on residues Ser-10, Ser-22, and Ser-23. The 246-residue stretch at 64–309 (DKEVVAVSVA…LIPWLLSPER (246 aa)) folds into the GB1/RHD3-type G domain. GDP contacts are provided by Arg-77, Lys-78, Gly-79, Lys-80, Ser-81, Phe-82, Gln-148, Arg-217, Asp-218, Val-276, and Asn-279. 6 residues coordinate GTP: Arg-77, Lys-78, Gly-79, Lys-80, Ser-81, and Phe-82. Ser-81 provides a ligand contact to Mg(2+). GTP contacts are provided by Arg-217, Asp-218, and Val-276. Positions 347–438 (MLQATAEANN…YIQYIKHNDS (92 aa)) are 3HB (three-helix bundle) domain. Residue Lys-395 is modified to N6-acetyllysine. The stretch at 412–439 (EFSRRYLQQLESEIDELYIQYIKHNDSK) forms a coiled coil. Residues 439–447 (KNIFHAART) form a linker region. A helical membrane pass occupies residues 450 to 470 (TLFVVIFITYVIAGVTGFIGL). Position 471 (Asp-471) is a topological domain, lumenal. A helical transmembrane segment spans residues 472 to 492 (IIASLCNMIMGLTLITLCTWA). At 493–558 (YIRYSGEYRE…PTQQPEKKKI (66 aa)) the chain is on the cytoplasmic side. The segment at 521–558 (NEALYKLYSAAATHRHLCHQAFPAPKSEPTQQPEKKKI) is autoinhibitory domain.

This sequence belongs to the TRAFAC class dynamin-like GTPase superfamily. GB1/RHD3 GTPase family. GB1 subfamily. In terms of assembly, monomeric and homodimeric. The homodimer, transiently formed by two molecules on opposing membranes, is the active form mediating ER membrane fusion. Interacts with REEP1, REEP5, RTN3 and RTN4 (via the transmembrane region); these proteins are involved in endoplasmic reticulum tubular network organization. Interacts with ZFYVE27; both proteins are involved in endoplasmic reticulum tubular network organization. Interacts with ARL6IP1; both proteins are involved in endoplasmic reticulum tubular network organization. Interacts with SPAST; the interaction is direct, could recruit SPAST to Golgi membranes. Interacts (via N-terminal region) with MAP4K4 (via CNH regulatory domain). May interact with TMED2. Interacts with CPT1C. Phosphorylated. Phosphorylation, by different kinases, of the N-terminal hypervariable region (HVR) regulates the ATL1-mediated membrane tethering step.

Its subcellular location is the endoplasmic reticulum membrane. The protein resides in the golgi apparatus membrane. The protein localises to the cell projection. It localises to the axon. The catalysed reaction is GTP + H2O = GDP + phosphate + H(+). Atlastin-1 (ATL1) is a membrane-anchored GTPase that mediates the GTP-dependent fusion of endoplasmic reticulum (ER) membranes, maintaining the continuous ER network. It facilitates the formation of three-way junctions where ER tubules intersect. Two atlastin-1 on neighboring ER tubules bind GTP and form loose homodimers through the GB1/RHD3-type G domains and 3HB regions. Upon GTP hydrolysis, the 3HB regions tighten, pulling the membranes together to drive their fusion. After fusion, the homodimer disassembles upon release of inorganic phosphate (Pi). Subsequently, GDP dissociates, resetting the monomers to a conformation ready for a new fusion cycle. May also regulate more or less directly Golgi biogenesis. Indirectly regulates axonal development. The polypeptide is Atlastin-1 (Mus musculus (Mouse)).